The primary structure comprises 439 residues: Hemagglutinin-esterase (439 aa).

Residues Met1 to Ala22 form the signal peptide. Residues Thr12–Ala132 are esterase domain 1. The Virion surface portion of the chain corresponds to Leu23–Val407. The active-site Nucleophile is the Ser45. Cys49 and Cys70 are disulfide-bonded. 5 N-linked (GlcNAc...) asparagine; by host glycosylation sites follow: Asn94, Asn152, Asn196, Asn246, and Asn316. Cysteines 118 and 167 form a disulfide. The tract at residues Arg133–Tyr281 is receptor binding. 2 cysteine pairs are disulfide-bonded: Cys202-Cys291 and Cys210-Cys264. The esterase domain 2 stretch occupies residues Leu282–Phe395. Cys322 and Cys327 form a disulfide bridge. Asn331 and Asn337 each carry an N-linked (GlcNAc...) asparagine; by host glycan. Residues Asp342 and His345 each act as charge relay system in the active site. 2 N-linked (GlcNAc...) asparagine; by host glycosylation sites follow: Asn360 and Asn374. A disulfide bridge links Cys363 with Cys387. A helical transmembrane segment spans residues Ile408 to Phe428. The Intravirion segment spans residues Met429–Ala439.

The protein belongs to the influenza type C/coronaviruses hemagglutinin-esterase family. In terms of assembly, homodimer; disulfide-linked. Forms a complex with the M protein in the pre-Golgi. Associates then with S-M complex to form a ternary complex S-M-HE. In terms of processing, N-glycosylated in the host RER.

It localises to the virion membrane. Its subcellular location is the host cell membrane. It catalyses the reaction N-acetyl-9-O-acetylneuraminate + H2O = N-acetylneuraminate + acetate + H(+). It carries out the reaction N-acetyl-4-O-acetylneuraminate + H2O = N-acetylneuraminate + acetate + H(+). Structural protein that makes short spikes at the surface of the virus. Contains receptor binding and receptor-destroying activities. Mediates de-O-acetylation of N-acetyl-4-O-acetylneuraminic acid, which is probably the receptor determinant recognized by the virus on the surface of erythrocytes and susceptible cells. This receptor-destroying activity is important for virus release as it probably helps preventing self-aggregation and ensures the efficient spread of the progeny virus from cell to cell. May serve as a secondary viral attachment protein for initiating infection, the spike protein being the major one. May become a target for both the humoral and the cellular branches of the immune system. The chain is Hemagglutinin-esterase from Puffinosis coronavirus (PV).